Here is a 203-residue protein sequence, read N- to C-terminus: Putative archaetidylserine decarboxylase proenzyme (203 aa).

Catalysis depends on Ser171, which acts as the Schiff-base intermediate with substrate; via pyruvic acid. At Ser171 the chain carries Pyruvic acid (Ser); by autocatalysis.

Belongs to the phosphatidylserine decarboxylase family. PSD-A subfamily. In terms of assembly, heterodimer of a large membrane-associated beta subunit and a small pyruvoyl-containing alpha subunit. Pyruvate serves as cofactor. Is synthesized initially as an inactive proenzyme. Formation of the active enzyme involves a self-maturation process in which the active site pyruvoyl group is generated from an internal serine residue via an autocatalytic post-translational modification. Two non-identical subunits are generated from the proenzyme in this reaction, and the pyruvate is formed at the N-terminus of the alpha chain, which is derived from the carboxyl end of the proenzyme. The post-translation cleavage follows an unusual pathway, termed non-hydrolytic serinolysis, in which the side chain hydroxyl group of the serine supplies its oxygen atom to form the C-terminus of the beta chain, while the remainder of the serine residue undergoes an oxidative deamination to produce ammonia and the pyruvoyl prosthetic group on the alpha chain.

The protein localises to the cell membrane. The catalysed reaction is archaetidylserine + H(+) = archaetidylethanolamine + CO2. Functionally, catalyzes the formation of archaetidylethanolamine (PtdEtn) from archaetidylserine (PtdSer). The protein is Putative archaetidylserine decarboxylase proenzyme of Methanosarcina barkeri (strain Fusaro / DSM 804).